The sequence spans 83 residues: FMRFamide-like neuropeptide 23 (83 aa).

The first 24 residues, 1 to 24 (MLLPKISILLYILVVLQETAAVRG), serve as a signal peptide directing secretion. Positions 25 to 36 (ALFRSGRAVPFE) are excised as a propeptide. At Phe47 the chain carries Phenylalanine amide. A propeptide spanning residues 50–83 (AGMASGVGGGSEGGPDDVKNSYIRVNGEPEIVYQ) is cleaved from the precursor.

This sequence belongs to the FARP (FMRFamide related peptide) family. As to expression, each flp gene is expressed in a distinct set of neurons.

Its subcellular location is the secreted. Functionally, FMRFamides and FMRFamide-like peptides are neuropeptides. In Caenorhabditis elegans, this protein is FMRFamide-like neuropeptide 23 (flp-23).